A 406-amino-acid chain; its full sequence is Tryptophan synthase beta chain (406 aa).

Lys99 carries the N6-(pyridoxal phosphate)lysine modification.

It belongs to the TrpB family. As to quaternary structure, tetramer of two alpha and two beta chains. It depends on pyridoxal 5'-phosphate as a cofactor.

The catalysed reaction is (1S,2R)-1-C-(indol-3-yl)glycerol 3-phosphate + L-serine = D-glyceraldehyde 3-phosphate + L-tryptophan + H2O. Its pathway is amino-acid biosynthesis; L-tryptophan biosynthesis; L-tryptophan from chorismate: step 5/5. Functionally, the beta subunit is responsible for the synthesis of L-tryptophan from indole and L-serine. This Brucella abortus (strain 2308) protein is Tryptophan synthase beta chain.